Consider the following 525-residue polypeptide: Mitochondrial-processing peptidase subunit alpha (525 aa).

A mitochondrion-targeting transit peptide spans 1-33 (MAAMVLAATRLLRGSGSWGRSRPRFGDPAYRRF). Position 64 is an N6-succinyllysine (K64). Position 299 is an N6-acetyllysine (K299).

It belongs to the peptidase M16 family. As to quaternary structure, heterodimer of PMPCA (alpha) and PMPCB (beta) subunits, forming the mitochondrial processing protease (MPP) in which PMPCA is involved in substrate recognition and binding and PMPCB is the catalytic subunit.

The protein localises to the mitochondrion matrix. It localises to the mitochondrion inner membrane. Its function is as follows. Substrate recognition and binding subunit of the essential mitochondrial processing protease (MPP), which cleaves the mitochondrial sequence off newly imported precursors proteins. The chain is Mitochondrial-processing peptidase subunit alpha (PMPCA) from Bos taurus (Bovine).